We begin with the raw amino-acid sequence, 122 residues long: Acidic phospholipase A2 Tpu-E6b (122 aa).

Disulfide bonds link cysteine 26-cysteine 115, cysteine 28-cysteine 44, cysteine 43-cysteine 95, cysteine 49-cysteine 122, cysteine 50-cysteine 88, cysteine 57-cysteine 81, and cysteine 75-cysteine 86. Residues tyrosine 27, glycine 29, and glycine 31 each contribute to the Ca(2+) site. Histidine 47 is an active-site residue. Ca(2+) is bound at residue aspartate 48. Aspartate 89 is a catalytic residue.

Monomer. Ca(2+) is required as a cofactor. Expressed by the venom gland.

It is found in the secreted. It catalyses the reaction a 1,2-diacyl-sn-glycero-3-phosphocholine + H2O = a 1-acyl-sn-glycero-3-phosphocholine + a fatty acid + H(+). Snake venom phospholipase A2 (PLA2) that weakly inhibits ADP-induced platelet aggregation when tested on platelet rich plasma from human and rabbit blood (15-25% of inhibition at 5-10 ug of enzyme). Exhibits moderate hydrolytic activities toward L-dipalmitoyl phosphatidylcholine. PLA2 catalyzes the calcium-dependent hydrolysis of the 2-acyl groups in 3-sn-phosphoglycerides. This is Acidic phospholipase A2 Tpu-E6b from Craspedocephalus puniceus (Flat-nosed pitviper).